Here is a 695-residue protein sequence, read N- to C-terminus: C6 finger domain transcription factor nscR (695 aa).

Positions 17-43 form a DNA-binding region, zn(2)-C6 fungal-type; that stretch reads CELCRERKVKCDKLDPCTNCASAGVVC. Positions 101 to 113 are enriched in low complexity; sequence SMRSSASQSSNQD. Positions 101–146 are disordered; it reads SMRSSASQSSNQDQESRDAIESISNETEDASAPTPDSSRMPLGDGG.

The protein resides in the nucleus. Transcription factor that specifically regulates the neosartoricin B biosynthesis gene cluster. The protein is C6 finger domain transcription factor nscR of Arthroderma otae (strain ATCC MYA-4605 / CBS 113480) (Microsporum canis).